We begin with the raw amino-acid sequence, 246 residues long: MGKRILVQRRGRGGSQFRSPSWKRDGPVRYPPLNVTVGRGYVVEILHEPGLNAPVARIRLENGVEFLNFAAEGLYVGQEIEVGDLAAPKTGNIVILGRVPEGTMVFNVEKRAGDGGKFARAGGTYAVVVGQKPEENKTIIRLPSGKVVEVDSRGRATVGIVAGGGRIEKPFLKAGKKYHRAKAKAWKYPTVRGKAMSPYAHPHGGGSHPKGGTPVPKTAPPGQKVGFYGSRCTGRGCVRARAQQKL.

The disordered stretch occupies residues 197–226 (SPYAHPHGGGSHPKGGTPVPKTAPPGQKVG).

This sequence belongs to the universal ribosomal protein uL2 family. In terms of assembly, part of the 50S ribosomal subunit. Forms a bridge to the 30S subunit in the 70S ribosome.

Functionally, one of the primary rRNA binding proteins. Required for association of the 30S and 50S subunits to form the 70S ribosome, for tRNA binding and peptide bond formation. It has been suggested to have peptidyltransferase activity; this is somewhat controversial. Makes several contacts with the 16S rRNA in the 70S ribosome. The protein is Large ribosomal subunit protein uL2 of Pyrobaculum islandicum (strain DSM 4184 / JCM 9189 / GEO3).